The sequence spans 308 residues: tRNA dimethylallyltransferase (308 aa).

14-21 (GPTASGKT) is an ATP binding site. 16–21 (TASGKT) contributes to the substrate binding site. Interaction with substrate tRNA stretches follow at residues 39–42 (DSAL), 163–167 (QRLSR), and 244–249 (RCVGYR).

Belongs to the IPP transferase family. As to quaternary structure, monomer. Requires Mg(2+) as cofactor.

It catalyses the reaction adenosine(37) in tRNA + dimethylallyl diphosphate = N(6)-dimethylallyladenosine(37) in tRNA + diphosphate. Functionally, catalyzes the transfer of a dimethylallyl group onto the adenine at position 37 in tRNAs that read codons beginning with uridine, leading to the formation of N6-(dimethylallyl)adenosine (i(6)A). This is tRNA dimethylallyltransferase from Shewanella baltica (strain OS185).